The chain runs to 739 residues: Mitochondrial proton/calcium exchanger protein (739 aa).

A mitochondrion-targeting transit peptide spans 1 to 115; that stretch reads MASILLRSCR…RGWHSSRPVR (115 aa). A coiled-coil region spans residues 115–136; it reads RDDSVVEKSLKSLKDKNKKLEE. Residues 116–208 are Mitochondrial intermembrane-facing; sequence DDSVVEKSLK…FLRICADLFR (93 aa). T192 is subject to Phosphothreonine; by PINK1. The helical transmembrane segment at 209-229 threads the bilayer; the sequence is LVPFLVFVVVPFMEFLLPVAV. The Mitochondrial matrix segment spans residues 230–739; it reads KLFPNMLPST…AEKEVAEVKS (510 aa). A Letm1 RBD domain is found at 252–537; sequence KELRVKLELA…TAPVLEGLKE (286 aa). Coiled coils occupy residues 462-490 and 537-627; these read NKAK…KRSE and EEEI…SQLE. K597 carries the N6-acetyllysine modification. Positions 663-698 constitute an EF-hand domain; that stretch reads IPESKLTSLAAALDENKDGKVNIDDLVKVIELVDKE. Residues D676, N678, D680, K682, and D687 each coordinate Ca(2+). Residues 708 to 739 adopt a coiled-coil conformation; sequence AEIVATLEKEEKVEEKEKAKEKAEKEVAEVKS. Positions 718–739 are disordered; the sequence is EKVEEKEKAKEKAEKEVAEVKS.

It belongs to the LETM1 family. As to quaternary structure, homohexamer. Can form 2 complexes: a major (300 kDa) and a minor complex (500-600 kDa). Interacts with BCS1L. Interacts with GHITM. In terms of processing, PINK1-mediated phosphorylation at Thr-192, positively regulates its mitochondrial calcium transport activity.

The protein localises to the mitochondrion inner membrane. It carries out the reaction Ca(2+)(in) + 2 H(+)(out) = Ca(2+)(out) + 2 H(+)(in). The catalysed reaction is K(+)(in) + H(+)(out) = K(+)(out) + H(+)(in). With respect to regulation, inhibited by ruthenium red or its derivative Ru360. Functionally, plays an important role in maintenance of mitochondrial morphology and in mediating either calcium or potassium/proton antiport. Mediates proton-dependent calcium efflux from mitochondrion. Also functions as an electroneutral mitochondrial proton/potassium exchanger. Crucial for the maintenance of mitochondrial tubular networks and for the assembly of the supercomplexes of the respiratory chain. Required for the maintenance of the tubular shape and cristae organization. In Homo sapiens (Human), this protein is Mitochondrial proton/calcium exchanger protein.